The sequence spans 536 residues: Suppressor of cytokine signaling 5 (536 aa).

The required for interaction with IL4R stretch occupies residues 1-50 (MDKVGKMWNNFKYRCQNLFGHEGGSRSENVDMNSNRCLSVKEKNISIGDS). Residues 115 to 175 (SRHAPWGGKK…SVSSRTVGSR (61 aa)) form a disordered region. Positions 158-169 (VSSVHDMDSVSS) are enriched in low complexity. The SH2 domain occupies 381–476 (CYWGVMDRYE…FFEPLLTISL (96 aa)). In terms of domain architecture, SOCS box spans 471–520 (LLTISLNRTFPFSLQYICRAVICRCTTYDGIDGLPLPSMLQDFLKEYHYK).

Interacts with IL4R; inhibits IL4 signaling. Interacts with EGFR. Interacts with ELOB and ELOC; mediates EGFR ubiquitination and degradation. In terms of processing, phosphorylated. Phosphorylation is induced by EGF.

The protein operates within protein modification; protein ubiquitination. Functionally, SOCS family proteins form part of a classical negative feedback system that regulates cytokine signal transduction. May be a substrate-recognition component of a SCF-like ECS (Elongin BC-CUL2/5-SOCS-box protein) E3 ubiquitin-protein ligase complex which mediates the ubiquitination and subsequent proteasomal degradation of target proteins. Inhibits for instance EGF signaling by mediating the degradation of the EGF receptor/EGFR. Involved in the regulation of T-helper cell differentiation by inhibiting of the IL4 signaling pathway which promotes differentiation into the Th2 phenotype. Can also partially inhibit IL6 and LIF signaling. This Homo sapiens (Human) protein is Suppressor of cytokine signaling 5 (SOCS5).